Reading from the N-terminus, the 72-residue chain is Translation initiation factor IF-1 (72 aa).

Positions Met1–Lys72 constitute an S1-like domain.

This sequence belongs to the IF-1 family. As to quaternary structure, component of the 30S ribosomal translation pre-initiation complex which assembles on the 30S ribosome in the order IF-2 and IF-3, IF-1 and N-formylmethionyl-tRNA(fMet); mRNA recruitment can occur at any time during PIC assembly.

Its subcellular location is the cytoplasm. In terms of biological role, one of the essential components for the initiation of protein synthesis. Stabilizes the binding of IF-2 and IF-3 on the 30S subunit to which N-formylmethionyl-tRNA(fMet) subsequently binds. Helps modulate mRNA selection, yielding the 30S pre-initiation complex (PIC). Upon addition of the 50S ribosomal subunit IF-1, IF-2 and IF-3 are released leaving the mature 70S translation initiation complex. In Hyphomonas neptunium (strain ATCC 15444), this protein is Translation initiation factor IF-1.